The sequence spans 441 residues: 5-methylthioadenosine/S-adenosylhomocysteine deaminase (441 aa).

His-70 and His-72 together coordinate Zn(2+). Substrate contacts are provided by Glu-99 and His-191. His-218 lines the Zn(2+) pocket. Positions 221 and 306 each coordinate substrate. A Zn(2+)-binding site is contributed by Asp-306.

The protein belongs to the metallo-dependent hydrolases superfamily. MTA/SAH deaminase family. It depends on Zn(2+) as a cofactor.

It catalyses the reaction S-adenosyl-L-homocysteine + H2O + H(+) = S-inosyl-L-homocysteine + NH4(+). The enzyme catalyses S-methyl-5'-thioadenosine + H2O + H(+) = S-methyl-5'-thioinosine + NH4(+). Functionally, catalyzes the deamination of 5-methylthioadenosine and S-adenosyl-L-homocysteine into 5-methylthioinosine and S-inosyl-L-homocysteine, respectively. Is also able to deaminate adenosine. The protein is 5-methylthioadenosine/S-adenosylhomocysteine deaminase of Lawsonia intracellularis (strain PHE/MN1-00).